The primary structure comprises 198 residues: ATP-dependent Clp protease proteolytic subunit (198 aa).

The Nucleophile role is filled by serine 98. Histidine 123 is a catalytic residue.

The protein belongs to the peptidase S14 family. In terms of assembly, fourteen ClpP subunits assemble into 2 heptameric rings which stack back to back to give a disk-like structure with a central cavity, resembling the structure of eukaryotic proteasomes.

The protein localises to the cytoplasm. It carries out the reaction Hydrolysis of proteins to small peptides in the presence of ATP and magnesium. alpha-casein is the usual test substrate. In the absence of ATP, only oligopeptides shorter than five residues are hydrolyzed (such as succinyl-Leu-Tyr-|-NHMec, and Leu-Tyr-Leu-|-Tyr-Trp, in which cleavage of the -Tyr-|-Leu- and -Tyr-|-Trp bonds also occurs).. Its function is as follows. Cleaves peptides in various proteins in a process that requires ATP hydrolysis. Has a chymotrypsin-like activity. Plays a major role in the degradation of misfolded proteins. The polypeptide is ATP-dependent Clp protease proteolytic subunit (Ehrlichia ruminantium (strain Gardel)).